The following is a 308-amino-acid chain: Probable 5-dehydro-4-deoxyglucarate dehydratase (308 aa).

Belongs to the DapA family.

It carries out the reaction 5-dehydro-4-deoxy-D-glucarate + H(+) = 2,5-dioxopentanoate + CO2 + H2O. It functions in the pathway carbohydrate acid metabolism; D-glucarate degradation; 2,5-dioxopentanoate from D-glucarate: step 2/2. This is Probable 5-dehydro-4-deoxyglucarate dehydratase from Bacillus licheniformis (strain ATCC 14580 / DSM 13 / JCM 2505 / CCUG 7422 / NBRC 12200 / NCIMB 9375 / NCTC 10341 / NRRL NRS-1264 / Gibson 46).